The primary structure comprises 715 residues: Polyribonucleotide nucleotidyltransferase (715 aa).

D495 and D501 together coordinate Mg(2+). In terms of domain architecture, KH spans 562–621 (PRLLTLQIPPDMIGLVIGPGGKTVRGISEQYNVKVDISEEGLVTITAPNETNAKQARAAI). One can recognise an S1 motif domain in the interval 631–699 (GDVYLGRVTR…SKGRINLTRL (69 aa)).

It belongs to the polyribonucleotide nucleotidyltransferase family. Mg(2+) is required as a cofactor.

Its subcellular location is the cytoplasm. The catalysed reaction is RNA(n+1) + phosphate = RNA(n) + a ribonucleoside 5'-diphosphate. Involved in mRNA degradation. Catalyzes the phosphorolysis of single-stranded polyribonucleotides processively in the 3'- to 5'-direction. The sequence is that of Polyribonucleotide nucleotidyltransferase from Thermosynechococcus vestitus (strain NIES-2133 / IAM M-273 / BP-1).